Consider the following 393-residue polypeptide: tRNA(Met) cytidine acetate ligase (393 aa).

Glycine 81, asparagine 142, and arginine 167 together coordinate ATP.

The protein belongs to the TmcAL family.

The protein localises to the cytoplasm. The enzyme catalyses cytidine(34) in elongator tRNA(Met) + acetate + ATP = N(4)-acetylcytidine(34) in elongator tRNA(Met) + AMP + diphosphate. In terms of biological role, catalyzes the formation of N(4)-acetylcytidine (ac(4)C) at the wobble position of elongator tRNA(Met), using acetate and ATP as substrates. First activates an acetate ion to form acetyladenylate (Ac-AMP) and then transfers the acetyl group to tRNA to form ac(4)C34. The chain is tRNA(Met) cytidine acetate ligase from Bacillus thuringiensis (strain Al Hakam).